A 427-amino-acid polypeptide reads, in one-letter code: Alpha/beta hydrolase gkaG (427 aa).

Asp-368 is a catalytic residue.

It belongs to the AB hydrolase superfamily. Homodimer.

It participates in mycotoxin biosynthesis. Its function is as follows. Alpha/beta hydrolase; part of the gene cluster that mediates the biosynthesis of GKK1032, fungal natural products containing a macrocyclic para-cyclophane connected to a decahydrofluorene ring system that show potent antitumor activities. Within the pathway, gkaG catalyzes the Knoevenagel condensation that affords the 3-pyrrolin-2-one ring, using as substrate the polyketide-tyrosyl acyl thioester product of gkaA. The pathway begins with the PKS-NRPS gkaA which, with the help of the trans-enoyl reductase gkaC, synthesizes the polyketide-tyrosyl acyl thioester product which can be reductively off-loaded by the terminal reductase (R) domain in gkaA. The alpha/beta hydrolase gkaG is then required to catalyze the subsequent Knoevenagel condensation that affords the 3-pyrrolin-2-one ring, whereas the three proteins gkaB, gkaX and gkaZ then function synergistically to form the cyclophane. This Penicillium citrinum protein is Alpha/beta hydrolase gkaG.